The primary structure comprises 347 residues: tRNA N6-adenosine threonylcarbamoyltransferase (347 aa).

Residues His-111 and His-115 each coordinate Fe cation. Substrate-binding positions include 134–138 (LISGG), Asp-167, Gly-180, and Asn-277. Asp-305 lines the Fe cation pocket.

Belongs to the KAE1 / TsaD family. Fe(2+) serves as cofactor.

The protein localises to the cytoplasm. The catalysed reaction is L-threonylcarbamoyladenylate + adenosine(37) in tRNA = N(6)-L-threonylcarbamoyladenosine(37) in tRNA + AMP + H(+). Required for the formation of a threonylcarbamoyl group on adenosine at position 37 (t(6)A37) in tRNAs that read codons beginning with adenine. Is involved in the transfer of the threonylcarbamoyl moiety of threonylcarbamoyl-AMP (TC-AMP) to the N6 group of A37, together with TsaE and TsaB. TsaD likely plays a direct catalytic role in this reaction. In Actinobacillus pleuropneumoniae serotype 5b (strain L20), this protein is tRNA N6-adenosine threonylcarbamoyltransferase.